The chain runs to 209 residues: Molybdenum cofactor guanylyltransferase (209 aa).

Residues 13 to 15 (LAG), Lys-26, Asn-54, Asp-74, and Asp-104 contribute to the GTP site. Residue Asp-104 participates in Mg(2+) binding.

Belongs to the MobA family. Monomer. Requires Mg(2+) as cofactor.

It localises to the cytoplasm. The enzyme catalyses Mo-molybdopterin + GTP + H(+) = Mo-molybdopterin guanine dinucleotide + diphosphate. In terms of biological role, transfers a GMP moiety from GTP to Mo-molybdopterin (Mo-MPT) cofactor (Moco or molybdenum cofactor) to form Mo-molybdopterin guanine dinucleotide (Mo-MGD) cofactor. The polypeptide is Molybdenum cofactor guanylyltransferase (Acinetobacter baumannii (strain ATCC 17978 / DSM 105126 / CIP 53.77 / LMG 1025 / NCDC KC755 / 5377)).